A 221-amino-acid chain; its full sequence is UPF0502 protein PA14_19450 (221 aa).

The protein belongs to the UPF0502 family.

This Pseudomonas aeruginosa (strain UCBPP-PA14) protein is UPF0502 protein PA14_19450.